A 260-amino-acid polypeptide reads, in one-letter code: Proteasome subunit alpha 1 (260 aa).

Residues 237-260 form a disordered region; the sequence is AEADLLDTGEDADDEAEDEDATEE. Residues 240 to 260 are compositionally biased toward acidic residues; that stretch reads DLLDTGEDADDEAEDEDATEE.

The protein belongs to the peptidase T1A family. As to quaternary structure, the 20S proteasome core is composed of 14 alpha and 14 beta subunits that assemble into four stacked heptameric rings, resulting in a barrel-shaped structure. The two inner rings, each composed of seven catalytic beta subunits, are sandwiched by two outer rings, each composed of seven alpha subunits. The catalytic chamber with the active sites is on the inside of the barrel. Has a gated structure, the ends of the cylinder being occluded by the N-termini of the alpha-subunits. Is capped at one or both ends by the proteasome regulatory ATPase, PAN.

It is found in the cytoplasm. Its activity is regulated as follows. The formation of the proteasomal ATPase PAN-20S proteasome complex, via the docking of the C-termini of PAN into the intersubunit pockets in the alpha-rings, triggers opening of the gate for substrate entry. Interconversion between the open-gate and close-gate conformations leads to a dynamic regulation of the 20S proteasome proteolysis activity. In terms of biological role, component of the proteasome core, a large protease complex with broad specificity involved in protein degradation. The protein is Proteasome subunit alpha 1 of Haloarcula marismortui (strain ATCC 43049 / DSM 3752 / JCM 8966 / VKM B-1809) (Halobacterium marismortui).